Consider the following 590-residue polypeptide: Aspartate--tRNA(Asp/Asn) ligase (590 aa).

Position 176 (Glu176) interacts with L-aspartate. Residues Gln200–Lys203 are aspartate. Residues Arg222 and His451 each coordinate L-aspartate. Arg222–Glu224 provides a ligand contact to ATP. Glu485 provides a ligand contact to ATP. Residue Arg492 participates in L-aspartate binding. Gly537–Arg540 is an ATP binding site.

It belongs to the class-II aminoacyl-tRNA synthetase family. Type 1 subfamily. In terms of assembly, homodimer.

It localises to the cytoplasm. It catalyses the reaction tRNA(Asx) + L-aspartate + ATP = L-aspartyl-tRNA(Asx) + AMP + diphosphate. Functionally, aspartyl-tRNA synthetase with relaxed tRNA specificity since it is able to aspartylate not only its cognate tRNA(Asp) but also tRNA(Asn). Reaction proceeds in two steps: L-aspartate is first activated by ATP to form Asp-AMP and then transferred to the acceptor end of tRNA(Asp/Asn). This chain is Aspartate--tRNA(Asp/Asn) ligase, found in Ehrlichia ruminantium (strain Gardel).